The chain runs to 34 residues: AVVPASTVKTALAYTYPIHPYHSVYAHPHSVVIY.

This Blaberus craniifer (Death's head cockroach) protein is Cuticle protein 9.